We begin with the raw amino-acid sequence, 511 residues long: MTNKLIIFDTTLRDGEQSPGASMTKDEKIRIAKVLEKMKVDVIEAGFAIASEGDFEAVQAVANIVQNSVICSLARALDKDIDRAGEALKGANASRIHTFIATSNIHMKMKLQMTPDQVVGQAVRAVKRANRYTDNIEFSPEDAGRSDEDFLCYIIEAVIKAGATTINIPDTVGYNIPHQFGATIKSLIERIPNSDKAIFSAHCHNDLGLAVANSLSAVLNGARQVECTINGLGERAGNTSLEELVMAVRTRQDIFDCDTNIDTMHILSASRLASSVTGFIIQPNKAIVGANAFAHEAGIHQDGVLKHRETYEIMRAEDVGWNANQLVLGKHSGRNAFKVRLAKLGVEFNDDGSLNDAFRRFKELADKKHEIFDEDLQALVSETQTESCDEAIKLVSLKVCTETNEKNTATVVLFINDKKKTATANTSGAVDATFSAINSLASIKINLQLYSVSNVTQGTDALGEVNVRLEYNGRIVNGQGVDTDIITASAKAYVHGLNKVLTVTNKAHPQI.

The Pyruvate carboxyltransferase domain occupies 5-267 (LIIFDTTLRD…DTNIDTMHIL (263 aa)). Aspartate 14, histidine 202, histidine 204, and asparagine 238 together coordinate Mn(2+). The interval 393–511 (KLVSLKVCTE…TVTNKAHPQI (119 aa)) is regulatory domain.

This sequence belongs to the alpha-IPM synthase/homocitrate synthase family. LeuA type 1 subfamily. Homodimer. Mn(2+) serves as cofactor.

It is found in the cytoplasm. It carries out the reaction 3-methyl-2-oxobutanoate + acetyl-CoA + H2O = (2S)-2-isopropylmalate + CoA + H(+). It participates in amino-acid biosynthesis; L-leucine biosynthesis; L-leucine from 3-methyl-2-oxobutanoate: step 1/4. Functionally, catalyzes the condensation of the acetyl group of acetyl-CoA with 3-methyl-2-oxobutanoate (2-ketoisovalerate) to form 3-carboxy-3-hydroxy-4-methylpentanoate (2-isopropylmalate). The protein is 2-isopropylmalate synthase of Vesicomyosocius okutanii subsp. Calyptogena okutanii (strain HA).